The sequence spans 226 residues: Transmembrane gamma-carboxyglutamic acid protein 4 (226 aa).

The signal sequence occupies residues 1 to 17 (MFTLLVLLSQLPTVTLG). A propeptide spanning residues 18 to 49 (FPHCARGPKASKHAGEEVFTSKEEANFFIHRR) is cleaved from the precursor. At 50–113 (LLYNRFDLEL…KSDGNREKID (64 aa)) the chain is on the extracellular side. The Gla domain occupies 52–98 (YNRFDLELFTPGNLERECNEELCNYEEAREIFVDEDKTIAFWQEYSA). A disulfide bond links C69 and C74. The residue at position 72 (E72) is a 4-carboxyglutamate. Residues 114–134 (VMGLLTGLIAAGVFLVIFGLL) traverse the membrane as a helical segment. Residues 135-226 (GYYLCITKCN…FKKSMSLPSH (92 aa)) are Cytoplasmic-facing. S163 is subject to Phosphoserine. Residues 186 to 189 (LPSY) carry the LPXY motif; mediates binding to WW domain-containing proteins motif. The short motif at 204–207 (PPPY) is the PPXY motif; mediates binding to WW domain-containing proteins element.

It belongs to the commissureless family. In terms of assembly, interacts (via cytoplasmic domain) with WW domain-containing proteins MAGI1, MAGI3, NEDD4, NEDD4L, WWTR1/TAZ and YAP1. Gamma-carboxyglutamate residues are formed by vitamin K dependent carboxylation. These residues are essential for the binding of calcium. In terms of tissue distribution, widely expressed with highest levels in kidney.

The protein resides in the endoplasmic reticulum-Golgi intermediate compartment membrane. The protein localises to the cell membrane. Functionally, may control axon guidance across the CNS. Prevents the delivery of ROBO1 at the cell surface and down-regulates its expression. This is Transmembrane gamma-carboxyglutamic acid protein 4 from Homo sapiens (Human).